The sequence spans 313 residues: S-methyl-5'-thioadenosine phosphorylase (313 aa).

Phosphate-binding positions include Thr-20, 68–69 (RH), and 101–102 (SA). Met-203 contributes to the substrate binding site. Ser-204 is a phosphate binding site. 227–229 (DYD) serves as a coordination point for substrate.

It belongs to the PNP/MTAP phosphorylase family. MTAP subfamily. In terms of assembly, homotrimer.

It localises to the cytoplasm. The protein localises to the nucleus. The enzyme catalyses S-methyl-5'-thioadenosine + phosphate = 5-(methylsulfanyl)-alpha-D-ribose 1-phosphate + adenine. Its pathway is amino-acid biosynthesis; L-methionine biosynthesis via salvage pathway; S-methyl-5-thio-alpha-D-ribose 1-phosphate from S-methyl-5'-thioadenosine (phosphorylase route): step 1/1. In terms of biological role, catalyzes the reversible phosphorylation of S-methyl-5'-thioadenosine (MTA) to adenine and 5-methylthioribose-1-phosphate. Involved in the breakdown of MTA, a major by-product of polyamine biosynthesis. Responsible for the first step in the methionine salvage pathway after MTA has been generated from S-adenosylmethionine. Has broad substrate specificity with 6-aminopurine nucleosides as preferred substrates. In Ajellomyces capsulatus (strain G186AR / H82 / ATCC MYA-2454 / RMSCC 2432) (Darling's disease fungus), this protein is S-methyl-5'-thioadenosine phosphorylase.